Here is a 626-residue protein sequence, read N- to C-terminus: DNA-directed RNA polymerase subunit beta C-terminal section (626 aa).

The interval 287-307 is disordered; sequence NTKSKNTGKGSKPPRASKAQN.

This sequence belongs to the RNA polymerase beta chain family. As to quaternary structure, in plastids the minimal PEP RNA polymerase catalytic core is composed of four subunits: alpha, beta, beta', and beta''. When a (nuclear-encoded) sigma factor is associated with the core the holoenzyme is formed, which can initiate transcription.

It is found in the plastid. Its subcellular location is the chloroplast. The enzyme catalyses RNA(n) + a ribonucleoside 5'-triphosphate = RNA(n+1) + diphosphate. In terms of biological role, DNA-dependent RNA polymerase catalyzes the transcription of DNA into RNA using the four ribonucleoside triphosphates as substrates. The sequence is that of DNA-directed RNA polymerase subunit beta C-terminal section (rpoB2) from Chlamydomonas reinhardtii (Chlamydomonas smithii).